We begin with the raw amino-acid sequence, 332 residues long: Flotillin-like protein FloA (332 aa).

A run of 2 helical transmembrane segments spans residues 6–26 and 28–48; these read LGYL…FSFV and VGLW…YMIG.

This sequence belongs to the flotillin-like FloA family. Homooligomerizes.

It is found in the cell membrane. The protein resides in the membrane raft. In terms of biological role, found in functional membrane microdomains (FMM) that may be equivalent to eukaryotic membrane rafts. FMMs are highly dynamic and increase in number as cells age. Flotillins are thought to be important factors in membrane fluidity. The protein is Flotillin-like protein FloA of Symbiobacterium thermophilum (strain DSM 24528 / JCM 14929 / IAM 14863 / T).